Reading from the N-terminus, the 287-residue chain is Pyridoxal kinase PdxY (287 aa).

Residues serine 10 and 45–46 (TQ) each bind substrate. Residues aspartate 112, alanine 144, glutamate 149, lysine 182, and 209–212 (RPLV) contribute to the ATP site. Aspartate 224 contributes to the substrate binding site.

Belongs to the pyridoxine kinase family. PdxY subfamily. In terms of assembly, homodimer. The cofactor is Mg(2+).

The catalysed reaction is pyridoxal + ATP = pyridoxal 5'-phosphate + ADP + H(+). It participates in cofactor metabolism; pyridoxal 5'-phosphate salvage; pyridoxal 5'-phosphate from pyridoxal: step 1/1. Pyridoxal kinase involved in the salvage pathway of pyridoxal 5'-phosphate (PLP). Catalyzes the phosphorylation of pyridoxal to PLP. The protein is Pyridoxal kinase PdxY of Escherichia coli O6:H1 (strain CFT073 / ATCC 700928 / UPEC).